Here is a 370-residue protein sequence, read N- to C-terminus: Cytochrome b (370 aa).

4 consecutive transmembrane segments (helical) span residues 25–45 (FGSM…FLAV), 69–90 (WLMQ…YIHI), 105–125 (WLSG…GYVL), and 170–190 (FFAL…LHVM). Positions 75 and 89 each coordinate heme b. The heme b site is built by H174 and H188. A ubiquinone is bound at residue H193. The next 4 membrane-spanning stretches (helical) occupy residues 218–238 (YKDL…VSFS), 280–300 (LGGA…PFTH), 312–332 (FMQM…WTAT), and 339–358 (FTLI…ISNP).

Belongs to the cytochrome b family. As to quaternary structure, the cytochrome bc1 complex contains 3 respiratory subunits (MT-CYB, CYC1 and UQCRFS1), 2 core proteins (UQCRC1 and UQCRC2) and probably 6 low-molecular weight proteins. Heme b is required as a cofactor.

The protein localises to the mitochondrion inner membrane. Component of the ubiquinol-cytochrome c reductase complex (complex III or cytochrome b-c1 complex) that is part of the mitochondrial respiratory chain. The b-c1 complex mediates electron transfer from ubiquinol to cytochrome c. Contributes to the generation of a proton gradient across the mitochondrial membrane that is then used for ATP synthesis. The protein is Cytochrome b (MT-CYB) of Eunectes notaeus (Yellow anaconda).